We begin with the raw amino-acid sequence, 691 residues long: Elongation factor G (691 aa).

Positions 8-283 constitute a tr-type G domain; that stretch reads KKVRNIGIAA…AVVAYLPAPD (276 aa). GTP contacts are provided by residues 17-24, 81-85, and 135-138; these read AHIDAGKT, DTPGH, and NKMD.

This sequence belongs to the TRAFAC class translation factor GTPase superfamily. Classic translation factor GTPase family. EF-G/EF-2 subfamily.

The protein resides in the cytoplasm. In terms of biological role, catalyzes the GTP-dependent ribosomal translocation step during translation elongation. During this step, the ribosome changes from the pre-translocational (PRE) to the post-translocational (POST) state as the newly formed A-site-bound peptidyl-tRNA and P-site-bound deacylated tRNA move to the P and E sites, respectively. Catalyzes the coordinated movement of the two tRNA molecules, the mRNA and conformational changes in the ribosome. In Campylobacter jejuni subsp. doylei (strain ATCC BAA-1458 / RM4099 / 269.97), this protein is Elongation factor G.